A 332-amino-acid polypeptide reads, in one-letter code: MNKLITIERHFLEQQKSHPEATGELTDLLNDVAFAAKLVRREVVRAGLADILGMAGTTNVQGEEVKKLDLFANEKIINAIGEHGRFALMGSEENEGTIIPPNNDTGRYILLFDPLDGSSNIDVNVSVGTIFSIYRLTGDDPKEADINDCLQKGSEQVAAGYVIYGSSVMMVYTTGQGVHGFTYDPTIGEFLLSHENITTPERGKYYSINEGSLHQFNDSTVNFINYLKEDDEATGRPYSTRYIGSLVADFHRNLMTGGVFVYPATKGHPNGKLRLMYEANPLAFICEQAGGRATNGKERILDINPTELHQRTPLYIGSKEDVLKAEEFEKEG.

Residues Glu-92, Asp-113, Leu-115, and Asp-116 each contribute to the Mg(2+) site. Substrate is bound by residues 116–119 (DGSS), Asn-209, Tyr-242, and Lys-272. Residue Glu-278 coordinates Mg(2+).

This sequence belongs to the FBPase class 1 family. Homotetramer. Requires Mg(2+) as cofactor.

It is found in the cytoplasm. The enzyme catalyses beta-D-fructose 1,6-bisphosphate + H2O = beta-D-fructose 6-phosphate + phosphate. It participates in carbohydrate biosynthesis; Calvin cycle. This is Fructose-1,6-bisphosphatase class 1 from Prosthecochloris aestuarii (strain DSM 271 / SK 413).